Reading from the N-terminus, the 384-residue chain is Heparin lyase I (384 aa).

A signal peptide spans 1 to 21 (MKKQILYLIVLQQLFLCSAYA). Gln-22 is subject to Blocked amino end (Gln). Ser-39 carries O-linked (Man...) serine glycosylation.

In terms of assembly, monomer. In terms of processing, the N-terminus is blocked.

Its subcellular location is the periplasm. It catalyses the reaction Eliminative cleavage of polysaccharides containing (1-&gt;4)-linked D-glucuronate or L-iduronate residues and (1-&gt;4)-alpha-linked 2-sulfoamino-2-deoxy-6-sulfo-D-glucose residues to give oligosaccharides with terminal 4-deoxy-alpha-D-gluc-4-enuronosyl groups at their non-reducing ends.. In terms of biological role, degrades heparin and heparan sulfate. Also implicated in the release of heparin-bound growth factors from the extracellular matrix. In Pedobacter heparinus (Flavobacterium heparinum), this protein is Heparin lyase I.